The chain runs to 310 residues: Urease accessory protein UreD (310 aa).

It belongs to the UreD family. UreD, UreF and UreG form a complex that acts as a GTP-hydrolysis-dependent molecular chaperone, activating the urease apoprotein by helping to assemble the nickel containing metallocenter of UreC. The UreE protein probably delivers the nickel.

The protein resides in the cytoplasm. In terms of biological role, required for maturation of urease via the functional incorporation of the urease nickel metallocenter. This chain is Urease accessory protein UreD, found in Synechococcus sp. (strain RCC307).